Here is a 230-residue protein sequence, read N- to C-terminus: Uracil-DNA glycosylase (230 aa).

D70 functions as the Proton acceptor in the catalytic mechanism.

This sequence belongs to the uracil-DNA glycosylase (UDG) superfamily. UNG family.

The protein resides in the cytoplasm. The catalysed reaction is Hydrolyzes single-stranded DNA or mismatched double-stranded DNA and polynucleotides, releasing free uracil.. Excises uracil residues from the DNA which can arise as a result of misincorporation of dUMP residues by DNA polymerase or due to deamination of cytosine. This is Uracil-DNA glycosylase from Pseudomonas fluorescens (strain ATCC BAA-477 / NRRL B-23932 / Pf-5).